The chain runs to 208 residues: Transmembrane emp24 domain-containing protein p24beta2 (208 aa).

The first 21 residues, 1-21 (MSLKGTIVLLGLLWSFQATLG), serve as a signal peptide directing secretion. The Lumenal segment spans residues 22–176 (IRFVIDREEC…ENMSKRAVHK (155 aa)). The region spanning 29–116 (EECFSHKAEY…HETIDFDVQL (88 aa)) is the GOLD domain. The stretch at 134-149 (LMEQISKLEEALYNIQ) forms a coiled coil. A glycan (N-linked (GlcNAc...) asparagine) is linked at N168. A helical membrane pass occupies residues 177-195 (ALFESFALIGASFLQVYLL). Residues 196-208 (RRLFERKLGMSRV) lie on the Cytoplasmic side of the membrane. Residues 198–199 (LF) carry the COPII vesicle coat-binding motif. The COPI vesicle coat-binding motif lies at 198-208 (LFERKLGMSRV). Positions 207–208 (RV) match the Required for the export from the endoplasmic reticulum to the Golgi motif.

The protein belongs to the EMP24/GP25L family. In terms of assembly, probably oligomerizes with other members of the EMP24/GP25L family. Associates with the COPI vesicle coat (coatomer). Associates with the COPII vesicle coat (coatomer). Interacts with p24delta5.

The protein localises to the golgi apparatus. It localises to the cis-Golgi network membrane. The protein resides in the golgi stack membrane. In terms of biological role, involved in vesicular protein trafficking. Mainly functions in the early secretory pathway but also in post-Golgi membranes. Thought to act as cargo receptor at the lumenal side for incorporation of secretory cargo molecules into transport vesicles and to be involved in vesicle coat formation at the cytoplasmic side. Interacts with p24delta5 at endoplasmic reticulum export sites for endoplasmic reticulum exit and coupled transport to the Golgi apparatus. The sequence is that of Transmembrane emp24 domain-containing protein p24beta2 from Arabidopsis thaliana (Mouse-ear cress).